Consider the following 143-residue polypeptide: Large ribosomal subunit protein uL16c (143 aa).

The protein belongs to the universal ribosomal protein uL16 family. As to quaternary structure, part of the 50S ribosomal subunit.

The protein localises to the plastid. Its subcellular location is the chloroplast. The polypeptide is Large ribosomal subunit protein uL16c (Chlorokybus atmophyticus (Soil alga)).